Reading from the N-terminus, the 128-residue chain is MISVGQQIIFISSGAALGALSRWGLGLLLNPLFSAFSLGTLVANYLGCLIIGVFLAFFWQYPQCSAEWRLFFVTGFLGSLTTFSTFSAEVIENLIQQKWLAGLMLASGHLLGCLLFTALGVFIWRYWQ.

The next 4 helical transmembrane spans lie at 8-28 (IIFI…LGLL), 38-58 (LGTL…LAFF), 71-91 (FFVT…AEVI), and 103-123 (LMLA…GVFI). Na(+) is bound by residues Gly-78 and Thr-81.

The protein belongs to the fluoride channel Fluc/FEX (TC 1.A.43) family.

It is found in the cell inner membrane. The catalysed reaction is fluoride(in) = fluoride(out). Na(+) is not transported, but it plays an essential structural role and its presence is essential for fluoride channel function. Fluoride-specific ion channel. Important for reducing fluoride concentration in the cell, thus reducing its toxicity. The sequence is that of Fluoride-specific ion channel FluC from Pasteurella multocida (strain Pm70).